The sequence spans 299 residues: Phosphate import ATP-binding protein PstB 1 (299 aa).

The segment at 1 to 51 is disordered; sequence MTENEMTSNDSTEPTPTTETAASSPDPSGDPLIEQSIDVEGTDSTAAETGK. Low complexity predominate over residues 10-27; the sequence is DSTEPTPTTETAASSPDP. Positions 54 to 294 constitute an ABC transporter domain; the sequence is IESSDLNVFY…PESQRVEDYI (241 aa). 86-93 serves as a coordination point for ATP; sequence GPSGCGKS.

It belongs to the ABC transporter superfamily. Phosphate importer (TC 3.A.1.7) family. The complex is composed of two ATP-binding proteins (PstB), two transmembrane proteins (PstC and PstA) and a solute-binding protein (PstS).

It localises to the cell membrane. It catalyses the reaction phosphate(out) + ATP + H2O = ADP + 2 phosphate(in) + H(+). In terms of biological role, part of the ABC transporter complex PstSACB involved in phosphate import. Responsible for energy coupling to the transport system. This Haloarcula marismortui (strain ATCC 43049 / DSM 3752 / JCM 8966 / VKM B-1809) (Halobacterium marismortui) protein is Phosphate import ATP-binding protein PstB 1.